A 130-amino-acid polypeptide reads, in one-letter code: D-ribose pyranase (130 aa).

Histidine 20 functions as the Proton donor in the catalytic mechanism. Substrate-binding positions include aspartate 28, histidine 97, and 119 to 121; that span reads YAN.

The protein belongs to the RbsD / FucU family. RbsD subfamily. Homodecamer.

It is found in the cytoplasm. It carries out the reaction beta-D-ribopyranose = beta-D-ribofuranose. Its pathway is carbohydrate metabolism; D-ribose degradation; D-ribose 5-phosphate from beta-D-ribopyranose: step 1/2. Its function is as follows. Catalyzes the interconversion of beta-pyran and beta-furan forms of D-ribose. In Bacillus pumilus (strain SAFR-032), this protein is D-ribose pyranase.